The following is a 274-amino-acid chain: MPVRVIVDSSACLPTHVAEDLDITVINLHVMNNGEERSTSGLSSLELAASYARQLERGGDDGVLALHISKELSSTWSAAVTAAAVFDDDSVRVVDTSSLGMAVGAAAMAAARMAKDGASLQECYDIAVDTLKRSETWIYLHRIDEIWKSGRISTATAMVSTALATRPIMRFNGGRMEIAAKTRTQSKAFAKLVELAQIRADGEPVFIAIGQNEAREAAKQLEELLRNALPEGSSFMSVDIDPTLAVHSGPGAVSVSAVFANQAPELSTGKAGAK.

The DegV domain maps to 3-259 (VRVIVDSSAC…PGAVSVSAVF (257 aa)). Hexadecanoate contacts are provided by Thr39 and Ser73.

Monomer.

Its function is as follows. Binds long-chain fatty acids, such as palmitate, and may play a role in lipid transport or fatty acid metabolism. This is DegV domain-containing protein Cgl2349/cg2579 from Corynebacterium glutamicum (strain ATCC 13032 / DSM 20300 / JCM 1318 / BCRC 11384 / CCUG 27702 / LMG 3730 / NBRC 12168 / NCIMB 10025 / NRRL B-2784 / 534).